The chain runs to 410 residues: Voltage-dependent chloride channel 2, chloroplastic (410 aa).

Residues 1–110 (MYQSMNLSFS…RHVSSSPSSR (110 aa)) are Lumenal, thylakoid-facing. Residues 111-131 (VILSLIPPVFFFTTVAILIAG) form a helical membrane-spanning segment. The Stromal portion of the chain corresponds to 132–147 (YNSAVDLDWLPDFFPV). Residues 148-168 (LRASPLPYQLTAPALALLLVF) traverse the membrane as a helical segment. The Lumenal, thylakoid segment spans residues 169–315 (RTEASYSRFE…PLSYTRLTSR (147 aa)). The next 2 helical transmembrane spans lie at 316–336 (FLVL…HWNV) and 337–357 (VPAT…GVLI). Residues 358–410 (EEPFSMLALDELCAMVLSNSDEAVESKEVIRNRIIAKKRILEIKHSSNGWHKS) lie on the Lumenal, thylakoid side of the membrane.

It belongs to the anion channel-forming bestrophin (TC 1.A.46) family. Voltage-dependent chloride channel subfamily. In terms of tissue distribution, mostly expressed in flowers and, to a lower extent, in leaves, stems and roots.

It is found in the plastid. The protein localises to the chloroplast thylakoid membrane. The catalysed reaction is chloride(in) = chloride(out). In terms of biological role, voltage-dependent chloride (Cl) channel probably contributing to proton motive force (PMF) partitioning across the thylakoid membrane by anion influx into the lumen. Influences thylakoid ultrastructure, including lumen size and organization. The sequence is that of Voltage-dependent chloride channel 2, chloroplastic from Arabidopsis thaliana (Mouse-ear cress).